The chain runs to 271 residues: Urease accessory protein UreD (271 aa).

It belongs to the UreD family. In terms of assembly, ureD, UreF and UreG form a complex that acts as a GTP-hydrolysis-dependent molecular chaperone, activating the urease apoprotein by helping to assemble the nickel containing metallocenter of UreC. The UreE protein probably delivers the nickel.

It is found in the cytoplasm. Functionally, required for maturation of urease via the functional incorporation of the urease nickel metallocenter. The chain is Urease accessory protein UreD from Bacillus sp. (strain TB-90).